Consider the following 569-residue polypeptide: Glycylpeptide N-tetradecanoyltransferase (569 aa).

A compositionally biased stretch (basic and acidic residues) spans 1–18 (MPPTEESKPVDPAQEKQA). Residues 1 to 82 (MPPTEESKPV…STESSAEVGL (82 aa)) are disordered. A compositionally biased stretch (basic residues) spans 55–68 (TKKKNKKKSKKKNK). Residues 158–161 (YKFW), 291–293 (LCI), and 299–303 (GKRLA) each bind tetradecanoyl-CoA. Residue valine 569 is the Proton acceptor; via carboxylate of the active site.

Belongs to the NMT family. As to quaternary structure, monomer.

The protein localises to the cytoplasm. The enzyme catalyses N-terminal glycyl-[protein] + tetradecanoyl-CoA = N-tetradecanoylglycyl-[protein] + CoA + H(+). Adds a myristoyl group to the N-terminal glycine residue of certain cellular proteins. This Neurospora crassa (strain ATCC 24698 / 74-OR23-1A / CBS 708.71 / DSM 1257 / FGSC 987) protein is Glycylpeptide N-tetradecanoyltransferase (gtt-1).